A 265-amino-acid chain; its full sequence is Vegetative storage protein 2 (265 aa).

Positions 1-18 are cleaved as a signal peptide; sequence MKILSLSLLLLLAATVSA. Residues N110, N188, and N210 are each glycosylated (N-linked (GlcNAc...) asparagine).

Belongs to the APS1/VSP family. As to expression, highly expressed in flowers, but also found in leaves, vegetative shoots, petioles, peduncles, and receptacles of floral organs.

Its function is as follows. May function as somatic storage protein during early seedling development. The protein is Vegetative storage protein 2 (VSP2) of Arabidopsis thaliana (Mouse-ear cress).